Reading from the N-terminus, the 228-residue chain is Small ribosomal subunit protein uS3 (228 aa).

A KH type-2 domain is found at 39–107; the sequence is VREYLQDKLK…PVHINIEEIR (69 aa).

It belongs to the universal ribosomal protein uS3 family. In terms of assembly, part of the 30S ribosomal subunit. Forms a tight complex with proteins S10 and S14.

Binds the lower part of the 30S subunit head. Binds mRNA in the 70S ribosome, positioning it for translation. This Pseudomonas syringae pv. syringae (strain B728a) protein is Small ribosomal subunit protein uS3.